The sequence spans 490 residues: GTPase Der (490 aa).

2 consecutive EngA-type G domains span residues 3–166 (PVVA…AEAM) and 200–373 (IKLA…DSAT). Residues 9–16 (GRPNVGKS), 56–60 (DTGGI), 118–121 (NKVD), 206–213 (GKPNVGKS), 253–257 (DTAGV), and 318–321 (NKWD) each bind GTP. In terms of domain architecture, KH-like spans 374–458 (RRVSTSMLTR…PIQIRFQDGG (85 aa)).

It belongs to the TRAFAC class TrmE-Era-EngA-EngB-Septin-like GTPase superfamily. EngA (Der) GTPase family. As to quaternary structure, associates with the 50S ribosomal subunit.

Functionally, GTPase that plays an essential role in the late steps of ribosome biogenesis. This Shewanella piezotolerans (strain WP3 / JCM 13877) protein is GTPase Der.